We begin with the raw amino-acid sequence, 127 residues long: Riboflavin kinase (127 aa).

10-15 (GLGEGK) is a binding site for CDP. Thr39 and Asn41 together coordinate Mg(2+). Positions 96 and 104 each coordinate FMN. 109–112 (IQLR) serves as a coordination point for CDP.

Belongs to the archaeal riboflavin kinase family. The cofactor is Mg(2+).

The catalysed reaction is riboflavin + CTP = CDP + FMN + H(+). It participates in cofactor biosynthesis; FMN biosynthesis; FMN from riboflavin (CTP route): step 1/1. Functionally, catalyzes the CTP-dependent phosphorylation of riboflavin (vitamin B2) to form flavin mononucleotide (FMN). The sequence is that of Riboflavin kinase from Methanococcus maripaludis (strain DSM 14266 / JCM 13030 / NBRC 101832 / S2 / LL).